Consider the following 55-residue polypeptide: U17-myrmicitoxin-Mri1b (55 aa).

Residues 1–31 (MENSRTSTFTAYVTVAFLLISTFVTMVVTES) form the signal peptide. At Q32 the chain carries Pyrrolidone carboxylic acid.

Post-translationally, contains 1 disulfide bond. In terms of tissue distribution, expressed by the venom gland.

The protein localises to the secreted. The polypeptide is U17-myrmicitoxin-Mri1b (Manica rubida (European giant red ant)).